Reading from the N-terminus, the 163-residue chain is NADH-quinone oxidoreductase subunit I (163 aa).

2 consecutive 4Fe-4S ferredoxin-type domains span residues 53–83 and 94–123; these read LRRY…IEAG and VRYD…EGPN. [4Fe-4S] cluster is bound by residues Cys63, Cys66, Cys69, Cys73, Cys103, Cys106, Cys109, and Cys113.

The protein belongs to the complex I 23 kDa subunit family. In terms of assembly, NDH-1 is composed of 14 different subunits. Subunits NuoA, H, J, K, L, M, N constitute the membrane sector of the complex. [4Fe-4S] cluster is required as a cofactor.

Its subcellular location is the cell inner membrane. The catalysed reaction is a quinone + NADH + 5 H(+)(in) = a quinol + NAD(+) + 4 H(+)(out). Its function is as follows. NDH-1 shuttles electrons from NADH, via FMN and iron-sulfur (Fe-S) centers, to quinones in the respiratory chain. The immediate electron acceptor for the enzyme in this species is believed to be ubiquinone. Couples the redox reaction to proton translocation (for every two electrons transferred, four hydrogen ions are translocated across the cytoplasmic membrane), and thus conserves the redox energy in a proton gradient. This chain is NADH-quinone oxidoreductase subunit I, found in Brucella canis (strain ATCC 23365 / NCTC 10854 / RM-666).